Reading from the N-terminus, the 253-residue chain is (S)-2-haloacid dehalogenase (253 aa).

The active-site Nucleophile is the Asp8. An (S)-2-haloacid-binding positions include 9 to 10 (AY), Arg39, and 114 to 115 (SN). The important for catalytic activity stretch occupies residues 171 to 176 (SSNGFD).

Belongs to the HAD-like hydrolase superfamily. S-2-haloalkanoic acid dehalogenase family. Homodimer.

The enzyme catalyses an (S)-2-haloacid + H2O = a (2R)-2-hydroxycarboxylate + a halide anion + H(+). It catalyses the reaction (S)-2-chloropropanoate + H2O = (R)-lactate + chloride + H(+). Catalyzes the hydrolytic dehalogenation of small (S)-2-haloalkanoic acids to yield the corresponding (R)-2-hydroxyalkanoic acids. Acts on acids of short chain lengths, C(2) to C(4), with inversion of configuration at C-2. Active with 2-halogenated carboxylic acids and converts only the S-isomer (or L-isomer) of 2-chloropropionic acid with inversion of configuration to produce R-lactate (or D-isomer). This is (S)-2-haloacid dehalogenase from Xanthobacter autotrophicus.